The chain runs to 291 residues: Ecto-ADP-ribosyltransferase 5 (291 aa).

A signal peptide spans 1-22 (MALAALMIALGSLGLHTWQAQA). Cysteine 42 and cysteine 258 are joined by a disulfide. A TR mART core domain is found at 62-252 (ALLRESWEAA…LVTLWSYNQT (191 aa)). Tyrosine 99 contacts NAD(+). The N-linked (GlcNAc...) asparagine glycan is linked to asparagine 101. NAD(+)-binding residues include arginine 160 and glutamine 180. Arginine 160 is an active-site residue. Serine 183 is an active-site residue. The N-linked (GlcNAc...) asparagine glycan is linked to asparagine 196. Serine 214 serves as a coordination point for NAD(+). The active site involves glutamate 221. Asparagine 250 carries an N-linked (GlcNAc...) asparagine glycan.

This sequence belongs to the Arg-specific ADP-ribosyltransferase family.

The protein localises to the secreted. The enzyme catalyses L-arginyl-[protein] + NAD(+) = N(omega)-(ADP-D-ribosyl)-L-arginyl-[protein] + nicotinamide + H(+). The protein is Ecto-ADP-ribosyltransferase 5 (ART5) of Homo sapiens (Human).